We begin with the raw amino-acid sequence, 196 residues long: RNA-binding protein with multiple splicing 2 (196 aa).

In terms of domain architecture, RRM spans 20–97; sequence RTLFVSGLPI…QTLRLEFAKA (78 aa). An important for homodimerization region spans residues 30–40; it reads DIKPRELYLLF.

In terms of assembly, homodimer. In terms of tissue distribution, expressed in developing heart, pronephros, retina and epiphysis. In adult, high expression in heart, moderate in kidney, undetectable in liver, lung and skeletal muscle.

The protein localises to the cytoplasm. The protein resides in the nucleus. Its subcellular location is the stress granule. In terms of biological role, RNA-binding protein involved in the regulation of smooth muscle cell differentiation and proliferation in the gastrointestinal system. Binds NOG mRNA, the major inhibitor of the bone morphogenetic protein (BMP) pathway. Mediates an increase of NOG mRNA levels, thereby contributing to the negative regulation of BMP signaling pathway and promoting reversible dedifferentiation and proliferation of smooth muscle cells. Acts as a pre-mRNA alternative splicing regulator. Mediates ACTN1 and FLNB alternative splicing. Likely binds to mRNA tandem CAC trinucleotide or CA dinucleotide motifs. This is RNA-binding protein with multiple splicing 2 from Xenopus laevis (African clawed frog).